The sequence spans 114 residues: Evasin-1 (114 aa).

The first 20 residues, 1 to 20 (MTFKACIAIITALCAMQVIC), serve as a signal peptide directing secretion. Intrachain disulfides connect Cys32/Cys53, Cys49/Cys90, Cys66/Cys95, and Cys85/Cys104. N-linked (GlcNAc...) asparagine glycans are attached at residues Asn39, Asn54, and Asn62.

This sequence belongs to the evasin C8 family. As to quaternary structure, monomer.

Its subcellular location is the secreted. In terms of biological role, salivary chemokine-binding protein which shows chemokine neutralizing activity and binds to host chemokines CCL3, CCL4 and CCL18. Binds to CCL3 with 1:1 stoichiometry. The protein is Evasin-1 of Rhipicephalus sanguineus (Brown dog tick).